Consider the following 200-residue polypeptide: ADP-ribose 1''-phosphate phosphatase (200 aa).

Positions 1-200 (MDPPSVRSKI…EVTVVRPHGG (200 aa)) constitute a Macro domain. Substrate-binding positions include 15–17 (GDL), 29–31 (ACN), 36–41 (WGKGIA), and 169–175 (FNAGLFG).

It belongs to the POA1 family.

It carries out the reaction ADP-alpha-D-ribose 1''-phosphate + H2O = ADP-D-ribose + phosphate. Highly specific phosphatase involved in the metabolism of ADP-ribose 1''-phosphate (Appr1p) which is produced as a consequence of tRNA splicing. This chain is ADP-ribose 1''-phosphate phosphatase (poa1), found in Aspergillus fumigatus (strain ATCC MYA-4609 / CBS 101355 / FGSC A1100 / Af293) (Neosartorya fumigata).